Here is a 544-residue protein sequence, read N- to C-terminus: Chaperonin GroEL (544 aa).

ATP contacts are provided by residues 29–32 (TLGP), 86–90 (DGTTT), G413, 477–479 (DVL), and D493.

Belongs to the chaperonin (HSP60) family. Forms a cylinder of 14 subunits composed of two heptameric rings stacked back-to-back. Interacts with the co-chaperonin GroES.

The protein localises to the cytoplasm. It catalyses the reaction ATP + H2O + a folded polypeptide = ADP + phosphate + an unfolded polypeptide.. Together with its co-chaperonin GroES, plays an essential role in assisting protein folding. The GroEL-GroES system forms a nano-cage that allows encapsulation of the non-native substrate proteins and provides a physical environment optimized to promote and accelerate protein folding. This Clostridium kluyveri (strain NBRC 12016) protein is Chaperonin GroEL.